The following is a 359-amino-acid chain: MVQASLSSPITPPKDTQALQEWLHQLADRIISGYRITKVEALALTEIEGQDQILLLCEAADRIRQACCGNRVDLCSIINIKSGHCSENCSFCSQSVHHPGQDSPVYGLKTSEEIVQQAKAAAAAGAKRFCLVSQGRGLKYNSPKSKEFAEILATVKRITTEAKIKPCCALGELTLEQAQALKEAGVTRYNHNLEASATFYPQIVTTHTWADRVETVKNLKAAGIQACTGGIIGMGESWEDRIDLALSLRDLEVDSVPINLLNPRQGTPLGHLPKLDPFEALQAIAIFRFILPQQILRYAGGREAIMGELQSLGLKAGINAMLIGHYLTTLGQSPQQDQAMLKSLGLEGGEAPIPGEYQP.

Residues C67–R302 form the Radical SAM core domain. [4Fe-4S] cluster is bound by residues C85, C89, and C92. C130, C167, C227, and R297 together coordinate [2Fe-2S] cluster.

It belongs to the radical SAM superfamily. Biotin synthase family. Homodimer. Requires [4Fe-4S] cluster as cofactor. It depends on [2Fe-2S] cluster as a cofactor.

It carries out the reaction (4R,5S)-dethiobiotin + (sulfur carrier)-SH + 2 reduced [2Fe-2S]-[ferredoxin] + 2 S-adenosyl-L-methionine = (sulfur carrier)-H + biotin + 2 5'-deoxyadenosine + 2 L-methionine + 2 oxidized [2Fe-2S]-[ferredoxin]. Its pathway is cofactor biosynthesis; biotin biosynthesis; biotin from 7,8-diaminononanoate: step 2/2. In terms of biological role, catalyzes the conversion of dethiobiotin (DTB) to biotin by the insertion of a sulfur atom into dethiobiotin via a radical-based mechanism. The polypeptide is Biotin synthase (Gloeothece citriformis (strain PCC 7424) (Cyanothece sp. (strain PCC 7424))).